The primary structure comprises 489 residues: tRNA(Ile)-lysidine synthase (489 aa).

35 to 40 (SGGLDS) contacts ATP.

This sequence belongs to the tRNA(Ile)-lysidine synthase family.

The protein localises to the cytoplasm. It catalyses the reaction cytidine(34) in tRNA(Ile2) + L-lysine + ATP = lysidine(34) in tRNA(Ile2) + AMP + diphosphate + H(+). Ligates lysine onto the cytidine present at position 34 of the AUA codon-specific tRNA(Ile) that contains the anticodon CAU, in an ATP-dependent manner. Cytidine is converted to lysidine, thus changing the amino acid specificity of the tRNA from methionine to isoleucine. The protein is tRNA(Ile)-lysidine synthase of Burkholderia pseudomallei (strain K96243).